Here is a 237-residue protein sequence, read N- to C-terminus: Putative N-acetylmannosamine-6-phosphate 2-epimerase (237 aa).

Belongs to the NanE family.

It catalyses the reaction an N-acyl-D-glucosamine 6-phosphate = an N-acyl-D-mannosamine 6-phosphate. It functions in the pathway amino-sugar metabolism; N-acetylneuraminate degradation; D-fructose 6-phosphate from N-acetylneuraminate: step 3/5. Functionally, converts N-acetylmannosamine-6-phosphate (ManNAc-6-P) to N-acetylglucosamine-6-phosphate (GlcNAc-6-P). The chain is Putative N-acetylmannosamine-6-phosphate 2-epimerase from Caldanaerobacter subterraneus subsp. tengcongensis (strain DSM 15242 / JCM 11007 / NBRC 100824 / MB4) (Thermoanaerobacter tengcongensis).